The chain runs to 70 residues: Frenatin 4.1 (70 aa).

The signal sequence occupies residues 1-22 (MAFLKKSLFLVLFLGLVNLSIC). A propeptide spanning residues 23-46 (EEEKREEENKEEEDENEALSEVKR) is cleaved from the precursor. Residue lysine 68 is modified to Lysine amide.

It belongs to the frog skin active peptide (FSAP) family. Frenatin subfamily. In terms of tissue distribution, expressed by the skin glands.

Its subcellular location is the secreted. It localises to the target cell membrane. Its function is as follows. Peptide with unknown function. Does not show antimicrobial activity against S.aureus (MIC&gt;512 ug/mL), E.coli (MIC&gt;512 ug/mL) and C.albicans (MIC&gt;512 ug/mL). Does not show hemolytic activity. Antimicrobial peptide with activity against E.coli (MIC=128 ug/mL or 54 uM) and C.albicans (MIC=256 ug/mL or 108 uM). Does not show activity against S.aureus (MIC&gt;512 ug/mL). Does not show hemolytic activity. The protein is Frenatin 4.1 of Nyctimystes infrafrenatus (White-lipped tree frog).